A 725-amino-acid polypeptide reads, in one-letter code: Ribosomal RNA large subunit methyltransferase K/L (725 aa).

Residues 46-157 (VAYRLCLWSR…RGEAVLSLDL (112 aa)) enclose the THUMP domain.

Belongs to the methyltransferase superfamily. RlmKL family.

The protein resides in the cytoplasm. The enzyme catalyses guanosine(2445) in 23S rRNA + S-adenosyl-L-methionine = N(2)-methylguanosine(2445) in 23S rRNA + S-adenosyl-L-homocysteine + H(+). It carries out the reaction guanosine(2069) in 23S rRNA + S-adenosyl-L-methionine = N(2)-methylguanosine(2069) in 23S rRNA + S-adenosyl-L-homocysteine + H(+). Specifically methylates the guanine in position 2445 (m2G2445) and the guanine in position 2069 (m7G2069) of 23S rRNA. In Ectopseudomonas mendocina (strain ymp) (Pseudomonas mendocina), this protein is Ribosomal RNA large subunit methyltransferase K/L.